A 236-amino-acid polypeptide reads, in one-letter code: 2,3,4,5-tetrahydropyridine-2,6-dicarboxylate N-acetyltransferase (236 aa).

The protein belongs to the transferase hexapeptide repeat family. DapH subfamily.

The catalysed reaction is (S)-2,3,4,5-tetrahydrodipicolinate + acetyl-CoA + H2O = L-2-acetamido-6-oxoheptanedioate + CoA. It functions in the pathway amino-acid biosynthesis; L-lysine biosynthesis via DAP pathway; LL-2,6-diaminopimelate from (S)-tetrahydrodipicolinate (acetylase route): step 1/3. Catalyzes the transfer of an acetyl group from acetyl-CoA to tetrahydrodipicolinate. This Bacillus pumilus (strain SAFR-032) protein is 2,3,4,5-tetrahydropyridine-2,6-dicarboxylate N-acetyltransferase.